Consider the following 305-residue polypeptide: Protoheme IX farnesyltransferase (305 aa).

9 consecutive transmembrane segments (helical) span residues 31–51 (VMSLVIFTGFVGIWLAPYSVH), 52–72 (PFIAGIAVVCIALGAGSAGAI), 102–119 (ALSFGLITGFFAVFFMAL), 123–145 (LLASFLLLFTIFYYICIYTIWLK), 151–171 (NIVIGGVSGALPPVIGYAAVS), 179–199 (IILFLIIFIWTPPHSWALALF), 225–245 (ILIYSILLFIVSLMPFFIGMN), 247–267 (FIYLITSGILGLVFLYYSGSL), and 284–304 (SIFYLFFIFLLLSSTSTISLI).

This sequence belongs to the UbiA prenyltransferase family. Protoheme IX farnesyltransferase subfamily.

It is found in the cell inner membrane. It catalyses the reaction heme b + (2E,6E)-farnesyl diphosphate + H2O = Fe(II)-heme o + diphosphate. It participates in porphyrin-containing compound metabolism; heme O biosynthesis; heme O from protoheme: step 1/1. Converts heme B (protoheme IX) to heme O by substitution of the vinyl group on carbon 2 of heme B porphyrin ring with a hydroxyethyl farnesyl side group. This Rickettsia felis (strain ATCC VR-1525 / URRWXCal2) (Rickettsia azadi) protein is Protoheme IX farnesyltransferase.